The following is an 88-amino-acid chain: uncharacterized protein (88 aa).

To E.coli YihD.

This is an uncharacterized protein from Haemophilus influenzae (strain ATCC 51907 / DSM 11121 / KW20 / Rd).